The sequence spans 258 residues: Imidazole glycerol phosphate synthase subunit HisF (258 aa).

Catalysis depends on residues D11 and D130.

It belongs to the HisA/HisF family. Heterodimer of HisH and HisF.

The protein resides in the cytoplasm. The enzyme catalyses 5-[(5-phospho-1-deoxy-D-ribulos-1-ylimino)methylamino]-1-(5-phospho-beta-D-ribosyl)imidazole-4-carboxamide + L-glutamine = D-erythro-1-(imidazol-4-yl)glycerol 3-phosphate + 5-amino-1-(5-phospho-beta-D-ribosyl)imidazole-4-carboxamide + L-glutamate + H(+). It participates in amino-acid biosynthesis; L-histidine biosynthesis; L-histidine from 5-phospho-alpha-D-ribose 1-diphosphate: step 5/9. Functionally, IGPS catalyzes the conversion of PRFAR and glutamine to IGP, AICAR and glutamate. The HisF subunit catalyzes the cyclization activity that produces IGP and AICAR from PRFAR using the ammonia provided by the HisH subunit. In Methylorubrum populi (strain ATCC BAA-705 / NCIMB 13946 / BJ001) (Methylobacterium populi), this protein is Imidazole glycerol phosphate synthase subunit HisF.